A 584-amino-acid polypeptide reads, in one-letter code: A-type ATP synthase subunit A (584 aa).

G234 to T241 is an ATP binding site.

The protein belongs to the ATPase alpha/beta chains family. Has multiple subunits with at least A(3), B(3), C, D, E, F, H, I and proteolipid K(x).

The protein resides in the cell membrane. It catalyses the reaction ATP + H2O + 4 H(+)(in) = ADP + phosphate + 5 H(+)(out). Its function is as follows. Component of the A-type ATP synthase that produces ATP from ADP in the presence of a proton gradient across the membrane. The A chain is the catalytic subunit. This Methanoculleus marisnigri (strain ATCC 35101 / DSM 1498 / JR1) protein is A-type ATP synthase subunit A.